A 104-amino-acid chain; its full sequence is Replication restart protein PriB (104 aa).

Residues 1–101 (MTNRLELSGV…LHADHIEIIC (101 aa)) form the SSB domain.

It belongs to the PriB family. As to quaternary structure, homodimer. Interacts with PriA and DnaT. Component of the replication restart primosome. Primosome assembly occurs via a 'hand-off' mechanism. PriA binds to replication forks, subsequently PriB then DnaT bind; DnaT then displaces ssDNA to generate the helicase loading substrate.

In terms of biological role, involved in the restart of stalled replication forks, which reloads the replicative helicase on sites other than the origin of replication; the PriA-PriB pathway is the major replication restart pathway. During primosome assembly it facilitates complex formation between PriA and DnaT on DNA; stabilizes PriA on DNA. Stimulates the DNA unwinding activity of PriA helicase. The polypeptide is Replication restart protein PriB (Photobacterium profundum (strain SS9)).